Here is a 506-residue protein sequence, read N- to C-terminus: COP9 signalosome complex subunit 2 (506 aa).

A PCI domain is found at 252-420 (SEENWEEAQS…GTVVVESASD (169 aa)). Over residues 482 to 491 (SGHRFRRGGK) the composition is skewed to basic residues. Residues 482-506 (SGHRFRRGGKGSKAGGGLGMKTGLF) form a disordered region. A compositionally biased stretch (gly residues) spans 492 to 506 (GSKAGGGLGMKTGLF).

It belongs to the CSN2 family. As to quaternary structure, component of the COP9 signalosome (CSN) complex.

The protein localises to the cytoplasm. It is found in the nucleus. In terms of biological role, component of the COP9 signalosome (CSN) complex that acts as an regulator of the ubiquitin (Ubl) conjugation pathway by mediating the deneddylation of the cullin subunit of SCF-type E3 ubiquitin-protein ligase complexes. The CSN complex seems to link protein degradation to sexual development. Required for fruit body formation. The sequence is that of COP9 signalosome complex subunit 2 (csnB) from Emericella nidulans (strain FGSC A4 / ATCC 38163 / CBS 112.46 / NRRL 194 / M139) (Aspergillus nidulans).